The sequence spans 343 residues: MLNIQNYSASPHPGIVAERPQTPSASEHVETAVVPSTTEHRGTDIISLSQAATKIHQAQQTLQSTPPISEENNDERTLARQQLTSSLNALAKSGVSLSAEQNENLRSAFSAPTSALFSASPMAQPRTTISDAEIWDMVSQNISAIGDSYLGVYENVVAVYTDFYQAFSDILSKMGGWLLPGKDGNTVKLDVTSLKNDLNSLVNKYNQINSNTVLFPAQSGSGVKVATEAEARQWLSELNLPNSCLKSYGSGYVVTVDLTPLQKMVQDIDGLGAPGKDSKLEMDNAKYQAWQSGFKAQEENMKTTLQTLTQKYSNANSLYDNLVKVLSSTISSSLETAKSFLQG.

The tract at residues 1–26 (MLNIQNYSASPHPGIVAERPQTPSAS) is disordered. Positions 295–322 (KAQEENMKTTLQTLTQKYSNANSLYDNL) form a coiled coil.

Belongs to the invasin protein D family.

It is found in the secreted. In terms of biological role, required for translocation of effector proteins via the type III secretion system SPI-1, which is essential for an efficient bacterial internalization. Probably acts by modulating the secretion of SipA, SipB, and SipC. The protein is Cell invasion protein SipD (sipD) of Salmonella typhimurium (strain LT2 / SGSC1412 / ATCC 700720).